Here is a 611-residue protein sequence, read N- to C-terminus: Leukotriene A-4 hydrolase (611 aa).

N6-acetyllysine is present on lysine 73. Residues 135–137 (QCQ) and 267–272 (SYGGME) each bind a peptide. Position 296 (histidine 296) interacts with Zn(2+). The active-site Proton acceptor is glutamate 297. Zn(2+) is bound by residues histidine 300 and glutamate 319. Lysine 337 is subject to N6-acetyllysine. Tyrosine 384 functions as the Proton donor in the catalytic mechanism. Position 414 is an N6-acetyllysine (lysine 414). Position 416 is a phosphoserine (serine 416). Position 564-566 (564-566 (RMK)) interacts with a peptide. Lysine 573 is subject to N6-acetyllysine.

Belongs to the peptidase M1 family. As to quaternary structure, monomer. The cofactor is Zn(2+). Post-translationally, phosphorylation at Ser-416 inhibits leukotriene-A4 hydrolase activity. activity.

It localises to the cytoplasm. The catalysed reaction is leukotriene A4 + H2O = leukotriene B4. It catalyses the reaction (5S,6S)-epoxy-(18R)-hydroxy-(7E,9E,11Z,14Z,16E)-eicosapentaenoate + H2O = resolvin E1. The enzyme catalyses (5S,6S)-epoxy-(18S)-hydroxy-(7E,9E,11Z,14Z,16E)-eicosapentaenoate + H2O = 18S-resolvin E1. It carries out the reaction Release of the N-terminal residue from a tripeptide.. It participates in lipid metabolism; leukotriene B4 biosynthesis. Inhibited by bestatin. The epoxide hydrolase activity is restrained by suicide inactivation that involves binding of LTA4 to Tyr-379. 4-(4-benzylphenyl)thiazol-2-amine (ARM1) selectively inhibits the epoxide hydrolase activity. Functionally, bifunctional zinc metalloenzyme that comprises both epoxide hydrolase (EH) and aminopeptidase activities. Acts as an epoxide hydrolase to catalyze the conversion of LTA4 to the pro-inflammatory mediator leukotriene B4 (LTB4). Also has aminopeptidase activity, with high affinity for N-terminal arginines of various synthetic tripeptides. In addition to its pro-inflammatory EH activity, may also counteract inflammation by its aminopeptidase activity, which inactivates by cleavage another neutrophil attractant, the tripeptide Pro-Gly-Pro (PGP), a bioactive fragment of collagen generated by the action of matrix metalloproteinase-9 (MMP9) and prolylendopeptidase (PREPL). Involved also in the biosynthesis of resolvin E1 and 18S-resolvin E1 from eicosapentaenoic acid, two lipid mediators that show potent anti-inflammatory and pro-resolving actions. The polypeptide is Leukotriene A-4 hydrolase (LTA4H) (Cavia porcellus (Guinea pig)).